A 932-amino-acid chain; its full sequence is MTEFLPFVARHIGPRHEDERAMLAALGLPSMETLITQAVPASIRLNRALNLPAALSEADALAELGTIMGRNVVKKSFIGAGYHGVHTPPVIQRNLFENPAWYTAYTPYQSEISQGRLELLFHFQTLVAELTGLPVACASLLDEATAVAEAIGVACRHHRDKRSRILLAGELHPQTVDVVNTRAEPLGWEIATGSDVDDNTAAIVVPWPDTRGVYGDFAKVIADAKAKGALVIAVADPLALTIMEAPARWGADMAVGSMQRYGVPMGFGGPHAAYLAVSEALTRIIPGRIVGQSVDAHGRAAYRLALQTREQHIRRDKATSNICTAQALLANMAAAFAIWHGPAGLQAIATRVAALAARFAAALKAAGVEIAGESLFDTVTAKVPGKAAAIAAEADKGGRLIRIIDADTVGVTFDETSTEEDLTALASLFGAKPVGGDTVLVPGKERGEGFLTQEVFHSHRSETEMMRFLRRLADKDLALDRAMIPLGSCTMKLNAAAEMMPVSWNTVANLHPFAPAEQVQGYAKMTSDLEAWLCEITGFAGVSLQPNAGSQGEYAGLMAIRHYHQARGQGHRNICLIPSSAHGTNPASASMAGMSVVVVNCRPDGDIDIDDLKAKAEKHRDNLAAFMITYPSTYGVFEEGIKAFCEIVHDNGGQVYFDGANLNALVGLARPADIGADVCHMNLHKTFCIPHGGGGPGVGPIGVAKHLVPYLPGHVEAGSEHAVAAAQFGSASILVITWMYIRMMGGAGLKKATEAAILNANYIAHRLKGVYPILYTGAHDRVAHECIVDTRVLKDSAGITVEDVAKRLIDYGFHAPTMSWPVAGTLMIEPTESEPKLEIDRLCDAMIAIAGEAKKVADGVWPADDNPLANAPHTASDTLATEWKHPYTREEAVFPGGAFDPTAKYWPPVSRVDNVGGDRNLICSCPPVAAYG.

Lysine 685 is subject to N6-(pyridoxal phosphate)lysine.

This sequence belongs to the GcvP family. The glycine cleavage system is composed of four proteins: P, T, L and H. Pyridoxal 5'-phosphate serves as cofactor.

The enzyme catalyses N(6)-[(R)-lipoyl]-L-lysyl-[glycine-cleavage complex H protein] + glycine + H(+) = N(6)-[(R)-S(8)-aminomethyldihydrolipoyl]-L-lysyl-[glycine-cleavage complex H protein] + CO2. Functionally, the glycine cleavage system catalyzes the degradation of glycine. The P protein binds the alpha-amino group of glycine through its pyridoxal phosphate cofactor; CO(2) is released and the remaining methylamine moiety is then transferred to the lipoamide cofactor of the H protein. The protein is Glycine dehydrogenase (decarboxylating) of Brucella melitensis biotype 2 (strain ATCC 23457).